The primary structure comprises 106 residues: Small ribosomal subunit protein uS10 (106 aa).

Belongs to the universal ribosomal protein uS10 family. Part of the 30S ribosomal subunit.

Involved in the binding of tRNA to the ribosomes. The chain is Small ribosomal subunit protein uS10 from Prochlorococcus marinus (strain MIT 9312).